A 612-amino-acid chain; its full sequence is MITFRGDGLYNSKFDDIYFNTNEPLIECEHTYSSVLDEINAKFIVVAEAGFGTGLNFFSTVLKFLSLNSTELHYIAVEKYPFKKSELREIYLKFEILKPFFDEFIEQYEILDGALIRIKLLNERVILDLYFGDILDAFDELSFRADAWYLDGFSPTKNPDMWSKEVFDRLSKFCKNRAKVRTFSSAKIVQNRFLEHGFSIKKLKGHYKKREILEASLEHSSPKILKEPWYALPNISKFSDVLIIGAGVAGLAAAFKFKKAGFNVCIAEKMSEAATNGSSNLAGILMPLITKPKVALGNMHMSAFLFARHFYANSPFADFCGVYDYGVNDLEKTRLSLWDSEIFKFENDFEPYPRAFIKSAAQIRPKELCMSLASEFDIKYGYEFESIEKSTGGYVVKFKNSKNIFSSLVIFAMGDVSTNLFQNVFADEFMQLSSVRGQVTHLNKVLNLNSAFSARGYMCKDVRGIQVVGATYDRNDNRSAARATDDEKNIDSLSEFITNLDVKVVGSNVGFRGYSGDRFPIVGAVHNASEFKKIYKSLLWTKHSKNNEFAVHHENILISSAHGSRGLGTAIFGAEILLDIALNRPVCTTNSILNSLNPARFLVRKLKRGLVR.

A tRNA (mnm(5)s(2)U34)-methyltransferase region spans residues 1–218 (MITFRGDGLY…KREILEASLE (218 aa)). An FAD-dependent cmnm(5)s(2)U34 oxidoreductase region spans residues 244–612 (IGAGVAGLAA…VRKLKRGLVR (369 aa)).

In the N-terminal section; belongs to the methyltransferase superfamily. tRNA (mnm(5)s(2)U34)-methyltransferase family. It in the C-terminal section; belongs to the DAO family. The cofactor is FAD.

Its subcellular location is the cytoplasm. The enzyme catalyses 5-aminomethyl-2-thiouridine(34) in tRNA + S-adenosyl-L-methionine = 5-methylaminomethyl-2-thiouridine(34) in tRNA + S-adenosyl-L-homocysteine + H(+). Its function is as follows. Catalyzes the last two steps in the biosynthesis of 5-methylaminomethyl-2-thiouridine (mnm(5)s(2)U) at the wobble position (U34) in tRNA. Catalyzes the FAD-dependent demodification of cmnm(5)s(2)U34 to nm(5)s(2)U34, followed by the transfer of a methyl group from S-adenosyl-L-methionine to nm(5)s(2)U34, to form mnm(5)s(2)U34. This chain is tRNA 5-methylaminomethyl-2-thiouridine biosynthesis bifunctional protein MnmC, found in Campylobacter fetus subsp. fetus (strain 82-40).